Here is a 631-residue protein sequence, read N- to C-terminus: Glycosyltransferase-like protein LARGE (631 aa).

Residues M1–S6 are Cytoplasmic-facing. Residues I7–F27 form a helical; Signal-anchor for type II membrane protein membrane-spanning segment. Residues V28–R631 are Lumenal-facing. N-linked (GlcNAc...) asparagine glycans are attached at residues N95, N105, N167, N177, N287, N400, N485, N502, N521, N529, and N593.

It belongs to the glycosyltransferase 8 family.

The protein resides in the golgi apparatus membrane. Probable glycosyltransferase. This Caenorhabditis elegans protein is Glycosyltransferase-like protein LARGE (lge-1).